Here is a 257-residue protein sequence, read N- to C-terminus: Imidazole glycerol phosphate synthase subunit HisF (257 aa).

Catalysis depends on residues Asp11 and Asp130.

The protein belongs to the HisA/HisF family. In terms of assembly, heterodimer of HisH and HisF.

The protein resides in the cytoplasm. It carries out the reaction 5-[(5-phospho-1-deoxy-D-ribulos-1-ylimino)methylamino]-1-(5-phospho-beta-D-ribosyl)imidazole-4-carboxamide + L-glutamine = D-erythro-1-(imidazol-4-yl)glycerol 3-phosphate + 5-amino-1-(5-phospho-beta-D-ribosyl)imidazole-4-carboxamide + L-glutamate + H(+). It participates in amino-acid biosynthesis; L-histidine biosynthesis; L-histidine from 5-phospho-alpha-D-ribose 1-diphosphate: step 5/9. In terms of biological role, IGPS catalyzes the conversion of PRFAR and glutamine to IGP, AICAR and glutamate. The HisF subunit catalyzes the cyclization activity that produces IGP and AICAR from PRFAR using the ammonia provided by the HisH subunit. This is Imidazole glycerol phosphate synthase subunit HisF from Prochlorococcus marinus (strain SARG / CCMP1375 / SS120).